The chain runs to 210 residues: Ras-related protein Rab-8 (210 aa).

Residue 15–22 (GDSGVGKT) coordinates GTP. The Effector region signature appears at 37–45 (FISTIGIDF). Residues 63–67 (DTAGQ) and 121–124 (NKCD) each bind GTP. At cysteine 207 the chain carries Cysteine methyl ester. Cysteine 207 carries the S-geranylgeranyl cysteine lipid modification. Residues 208–210 (SLL) constitute a propeptide, removed in mature form.

This sequence belongs to the small GTPase superfamily. Rab family.

Its subcellular location is the cell membrane. This Diplobatis ommata (Ocellated electric ray) protein is Ras-related protein Rab-8.